The chain runs to 763 residues: Phosphoglycerol transferase I (763 aa).

4 helical membrane passes run 1–21 (MSEL…AWKA), 26–46 (WWFA…ITLF), 77–97 (ILPG…LGWI), and 108–128 (FGYS…SPAF).

Belongs to the OpgB family.

It localises to the cell inner membrane. It carries out the reaction a phosphatidylglycerol + a membrane-derived-oligosaccharide D-glucose = a 1,2-diacyl-sn-glycerol + a membrane-derived-oligosaccharide 6-(glycerophospho)-D-glucose.. The protein operates within glycan metabolism; osmoregulated periplasmic glucan (OPG) biosynthesis. Its function is as follows. Transfers a phosphoglycerol residue from phosphatidylglycerol to the membrane-bound nascent glucan backbones. This Escherichia coli O6:K15:H31 (strain 536 / UPEC) protein is Phosphoglycerol transferase I.